Reading from the N-terminus, the 235-residue chain is 7-cyano-7-deazaguanine synthase (235 aa).

16 to 26 lines the ATP pocket; that stretch reads FSGGQDSTTCL. The Zn(2+) site is built by cysteine 193, cysteine 201, cysteine 204, and cysteine 207.

The protein belongs to the QueC family. Zn(2+) is required as a cofactor.

The enzyme catalyses 7-carboxy-7-deazaguanine + NH4(+) + ATP = 7-cyano-7-deazaguanine + ADP + phosphate + H2O + H(+). Its pathway is purine metabolism; 7-cyano-7-deazaguanine biosynthesis. Its function is as follows. Catalyzes the ATP-dependent conversion of 7-carboxy-7-deazaguanine (CDG) to 7-cyano-7-deazaguanine (preQ(0)). This Actinobacillus succinogenes (strain ATCC 55618 / DSM 22257 / CCUG 43843 / 130Z) protein is 7-cyano-7-deazaguanine synthase.